Here is a 565-residue protein sequence, read N- to C-terminus: NAD-dependent malic enzyme (565 aa).

The active-site Proton donor is the tyrosine 104. An NAD(+)-binding site is contributed by arginine 157. Catalysis depends on lysine 175, which acts as the Proton acceptor. 3 residues coordinate a divalent metal cation: glutamate 246, aspartate 247, and aspartate 270. NAD(+)-binding residues include aspartate 270 and asparagine 418.

This sequence belongs to the malic enzymes family. Homotetramer. Requires Mg(2+) as cofactor. The cofactor is Mn(2+).

It catalyses the reaction (S)-malate + NAD(+) = pyruvate + CO2 + NADH. The enzyme catalyses oxaloacetate + H(+) = pyruvate + CO2. This chain is NAD-dependent malic enzyme, found in Enterobacter sp. (strain 638).